The primary structure comprises 227 residues: Ornithine decarboxylase antizyme 1 (227 aa).

It belongs to the ODC antizyme family. As to quaternary structure, interacts with ODC1 and thereby sterically blocks ODC homodimerization. Forms a ternary complex with PSMB4 and OAZ1 before PSMB4 is incorporated into the 20S proteasome. Interacts with AZIN2; this interaction disrupts the interaction between the antizyme and ODC1. Interacts with FAM171A1.

Ornithine decarboxylase (ODC) antizyme protein that negatively regulates ODC activity and intracellular polyamine biosynthesis and uptake in response to increased intracellular polyamine levels. Binds to ODC monomers, inhibiting the assembly of the functional ODC homodimer, and targets the monomers for ubiquitin-independent proteolytic destruction by the 26S proteasome. Triggers ODC degradation by inducing the exposure of a cryptic proteasome-interacting surface of ODC. Stabilizes AZIN2 by interfering with its ubiquitination. Also inhibits cellular uptake of polyamines by inactivating the polyamine uptake transporter. SMAD1/OAZ1/PSMB4 complex mediates the degradation of the CREBBP/EP300 repressor SNIP1. Involved in the translocation of AZIN2 from ER-Golgi intermediate compartment (ERGIC) to the cytosol. In Mus musculus (Mouse), this protein is Ornithine decarboxylase antizyme 1 (Oaz1).